A 266-amino-acid chain; its full sequence is Putative carbamate hydrolase RutD (266 aa).

Positions 14–115 (PVVVLISGLG…TMLVSVNGWL (102 aa)) constitute an AB hydrolase-1 domain.

Belongs to the AB hydrolase superfamily. Hydrolase RutD family.

It catalyses the reaction carbamate + 2 H(+) = NH4(+) + CO2. In terms of biological role, involved in pyrimidine catabolism. May facilitate the hydrolysis of carbamate, a reaction that can also occur spontaneously. The chain is Putative carbamate hydrolase RutD from Shigella flexneri serotype 5b (strain 8401).